A 439-amino-acid chain; its full sequence is Xylose isomerase (439 aa).

Residues His-98 and Asp-101 contribute to the active site. Residues Glu-229, Glu-265, His-268, Asp-293, Asp-304, Asp-306, and Asp-335 each coordinate Mg(2+).

This sequence belongs to the xylose isomerase family. Homotetramer. The cofactor is Mg(2+).

Its subcellular location is the cytoplasm. It catalyses the reaction alpha-D-xylose = alpha-D-xylulofuranose. In terms of biological role, involved in D-xylose catabolism. This chain is Xylose isomerase (xylA), found in Staphylococcus xylosus.